The primary structure comprises 218 residues: Probable transaldolase (218 aa).

The active-site Schiff-base intermediate with substrate is the Lys-83.

This sequence belongs to the transaldolase family. Type 3B subfamily.

It is found in the cytoplasm. The catalysed reaction is D-sedoheptulose 7-phosphate + D-glyceraldehyde 3-phosphate = D-erythrose 4-phosphate + beta-D-fructose 6-phosphate. It participates in carbohydrate degradation; pentose phosphate pathway; D-glyceraldehyde 3-phosphate and beta-D-fructose 6-phosphate from D-ribose 5-phosphate and D-xylulose 5-phosphate (non-oxidative stage): step 2/3. In terms of biological role, transaldolase is important for the balance of metabolites in the pentose-phosphate pathway. The polypeptide is Probable transaldolase (Thermotoga sp. (strain RQ2)).